The following is a 491-amino-acid chain: Protein nucleotidyltransferase YdiU (491 aa).

8 residues coordinate ATP: glycine 94, glycine 96, arginine 97, lysine 117, aspartate 129, glycine 130, arginine 180, and arginine 187. Catalysis depends on aspartate 256, which acts as the Proton acceptor. Mg(2+)-binding residues include asparagine 257 and aspartate 266. Residue aspartate 266 participates in ATP binding.

The protein belongs to the SELO family. Mg(2+) is required as a cofactor. It depends on Mn(2+) as a cofactor.

It catalyses the reaction L-seryl-[protein] + ATP = 3-O-(5'-adenylyl)-L-seryl-[protein] + diphosphate. The enzyme catalyses L-threonyl-[protein] + ATP = 3-O-(5'-adenylyl)-L-threonyl-[protein] + diphosphate. The catalysed reaction is L-tyrosyl-[protein] + ATP = O-(5'-adenylyl)-L-tyrosyl-[protein] + diphosphate. It carries out the reaction L-histidyl-[protein] + UTP = N(tele)-(5'-uridylyl)-L-histidyl-[protein] + diphosphate. It catalyses the reaction L-seryl-[protein] + UTP = O-(5'-uridylyl)-L-seryl-[protein] + diphosphate. The enzyme catalyses L-tyrosyl-[protein] + UTP = O-(5'-uridylyl)-L-tyrosyl-[protein] + diphosphate. Its function is as follows. Nucleotidyltransferase involved in the post-translational modification of proteins. It can catalyze the addition of adenosine monophosphate (AMP) or uridine monophosphate (UMP) to a protein, resulting in modifications known as AMPylation and UMPylation. This chain is Protein nucleotidyltransferase YdiU, found in Clostridium botulinum (strain 657 / Type Ba4).